The sequence spans 76 residues: Esculentin-2-ALa (76 aa).

The first 22 residues, 1–22 (MFTLKKSMLLLFFLGTISLSLC), serve as a signal peptide directing secretion. Residues 23–39 (EEERNADEDDGEKEVKR) constitute a propeptide that is removed on maturation. Cysteines 70 and 76 form a disulfide.

Expressed by the skin glands.

It is found in the secreted. Its function is as follows. Antimicrobial peptide with activity against Gram-positive and Gram-negative bacteria and against fungi. Has been tested against S.aureus (MIC=2.5 ug/mL), B.pumilus (MIC=2.5 ug/mL), B.cereus (MIC=7.5 ug/mL), E.coli (MIC=12.5 ug/mL), B.dysenteriae (MIC=7.5 ug/mL), A.cacoaceticus (MIC=25.0 ug/mL), P.aeruginosa (MIC=50.0 ug/mL) and C.albicans (MIC=2.5 ug/mL). Also shows a weak hemolytic activity. In Amolops loloensis (Lolokou Sucker Frog), this protein is Esculentin-2-ALa.